We begin with the raw amino-acid sequence, 119 residues long: Small capsomere-interacting protein (119 aa).

Belongs to the herpesviridae small capsomere-interacting protein family. Interacts with the major capsid protein/MCP.

It localises to the virion. Its subcellular location is the host nucleus. In terms of biological role, participates in the assembly of the infectious particles by decorating the outer surface of the capsid shell and thus forming a layer between the capsid and the tegument. Complexes composed of the major capsid protein and small capsomere-interacting protein/SCP assemble together in the host cytoplasm and are translocated to the nucleus, where they accumulate and participate in capsid assembly. The protein is Small capsomere-interacting protein of Equine herpesvirus 1 (strain V592) (EHV-1).